The sequence spans 288 residues: Elongation factor Ts (288 aa).

The tract at residues 82 to 85 (TDFV) is involved in Mg(2+) ion dislocation from EF-Tu.

It belongs to the EF-Ts family.

The protein resides in the cytoplasm. Associates with the EF-Tu.GDP complex and induces the exchange of GDP to GTP. It remains bound to the aminoacyl-tRNA.EF-Tu.GTP complex up to the GTP hydrolysis stage on the ribosome. The protein is Elongation factor Ts of Chlorobium limicola (strain DSM 245 / NBRC 103803 / 6330).